The chain runs to 339 residues: Ketol-acid reductoisomerase (NADP(+)) (339 aa).

A KARI N-terminal Rossmann domain is found at Met-1 to Thr-182. NADP(+) is bound by residues Tyr-24–Gln-27, Arg-48, Ser-51, Thr-53, and Asp-83–Gln-86. His-108 is an active-site residue. An NADP(+)-binding site is contributed by Gly-134. One can recognise a KARI C-terminal knotted domain in the interval Thr-183 to Ile-328. The Mg(2+) site is built by Asp-191, Glu-195, Glu-227, and Glu-231. Ser-252 is a substrate binding site.

This sequence belongs to the ketol-acid reductoisomerase family. Requires Mg(2+) as cofactor.

The enzyme catalyses (2R)-2,3-dihydroxy-3-methylbutanoate + NADP(+) = (2S)-2-acetolactate + NADPH + H(+). The catalysed reaction is (2R,3R)-2,3-dihydroxy-3-methylpentanoate + NADP(+) = (S)-2-ethyl-2-hydroxy-3-oxobutanoate + NADPH + H(+). The protein operates within amino-acid biosynthesis; L-isoleucine biosynthesis; L-isoleucine from 2-oxobutanoate: step 2/4. Its pathway is amino-acid biosynthesis; L-valine biosynthesis; L-valine from pyruvate: step 2/4. Involved in the biosynthesis of branched-chain amino acids (BCAA). Catalyzes an alkyl-migration followed by a ketol-acid reduction of (S)-2-acetolactate (S2AL) to yield (R)-2,3-dihydroxy-isovalerate. In the isomerase reaction, S2AL is rearranged via a Mg-dependent methyl migration to produce 3-hydroxy-3-methyl-2-ketobutyrate (HMKB). In the reductase reaction, this 2-ketoacid undergoes a metal-dependent reduction by NADPH to yield (R)-2,3-dihydroxy-isovalerate. The polypeptide is Ketol-acid reductoisomerase (NADP(+)) (Parvibaculum lavamentivorans (strain DS-1 / DSM 13023 / NCIMB 13966)).